A 380-amino-acid chain; its full sequence is MAETDQPGKIFIGGLNIKTRQKTLQEIFGRFGPVARVILMRDRETKKSRGFAFLTFRRPADAKNAVKEMNGVILDGKRIKVKQARRPSSLESGSKKRPPSFSRTRGASRILKCGRGGRSRARSGPSCEGNLGGDRYTPNFNVSSSGRHFAVKRNPSSKRDGPPSKRSATSAQTRSNTGLRGREPHRREISRNMPRGEPASSRRDEYPLPRDYGQSSNDRKYESTSRGYCDYGNYHSREESASKVFSDHAGYLGGRDRDFSEYLSGNSYRDTYRSYGRFHEAPSARGGNNRYDDYSNSQDGYGGRGEPYISNRSNIYSSDYERSGRQEVLPPPIDREYFDREGRQERGHSPKDGLYSASRESYSSNTKIWGIPWRSWRKQI.

In terms of domain architecture, RRM spans 8 to 86 (GKIFIGGLNI…KRIKVKQARR (79 aa)). Disordered stretches follow at residues 82–226 (KQAR…STSR) and 279–358 (HEAP…YSAS). Residues 166 to 178 (RSATSAQTRSNTG) are compositionally biased toward polar residues. 2 stretches are compositionally biased toward basic and acidic residues: residues 180 to 190 (RGREPHRREIS) and 333 to 351 (IDREYFDREGRQERGHSPK).

As to expression, testis-specific.

It localises to the nucleus. Functionally, RNA-binding protein which may be involved in spermatogenesis. May be required for sperm development, possibly by participating in pre-mRNA splicing in the testis. The chain is RNA-binding motif protein, Y chromosome, family 9 from Mus musculus (Mouse).